Here is a 425-residue protein sequence, read N- to C-terminus: Probable threonylcarbamoyladenosine tRNA methylthiotransferase (425 aa).

Residues 2–110 form the MTTase N-terminal domain; that stretch reads VKIYIENYGC…IIQAVEYALR (109 aa). Positions 11, 47, 76, 148, 152, and 155 each coordinate [4Fe-4S] cluster. A Radical SAM core domain is found at 133–363; that stretch reads LSPRTVYFIV…HRIRLQISYE (231 aa). A TRAM domain is found at 366–425; that stretch reads QKYIGKKVEVLIHGEGKKGNVDAVTMNYKHVILPFGNSGEFRIAEIKNATSTYLLGEVMS.

It belongs to the methylthiotransferase family. CDKAL1 subfamily. Requires [4Fe-4S] cluster as cofactor.

It catalyses the reaction N(6)-L-threonylcarbamoyladenosine(37) in tRNA + (sulfur carrier)-SH + AH2 + 2 S-adenosyl-L-methionine = 2-methylsulfanyl-N(6)-L-threonylcarbamoyladenosine(37) in tRNA + (sulfur carrier)-H + 5'-deoxyadenosine + L-methionine + A + S-adenosyl-L-homocysteine + 2 H(+). Catalyzes the methylthiolation of N6-threonylcarbamoyladenosine (t(6)A), leading to the formation of 2-methylthio-N6-threonylcarbamoyladenosine (ms(2)t(6)A) at position 37 in tRNAs that read codons beginning with adenine. This Pyrococcus abyssi (strain GE5 / Orsay) protein is Probable threonylcarbamoyladenosine tRNA methylthiotransferase.